A 521-amino-acid chain; its full sequence is Bifunctional purine biosynthesis protein PurH (521 aa).

An MGS-like domain is found at 1-145 (MIKQALISVS…KNHRDVTVVV (145 aa)).

The protein belongs to the PurH family.

It catalyses the reaction (6R)-10-formyltetrahydrofolate + 5-amino-1-(5-phospho-beta-D-ribosyl)imidazole-4-carboxamide = 5-formamido-1-(5-phospho-D-ribosyl)imidazole-4-carboxamide + (6S)-5,6,7,8-tetrahydrofolate. It carries out the reaction IMP + H2O = 5-formamido-1-(5-phospho-D-ribosyl)imidazole-4-carboxamide. The protein operates within purine metabolism; IMP biosynthesis via de novo pathway; 5-formamido-1-(5-phospho-D-ribosyl)imidazole-4-carboxamide from 5-amino-1-(5-phospho-D-ribosyl)imidazole-4-carboxamide (10-formyl THF route): step 1/1. It participates in purine metabolism; IMP biosynthesis via de novo pathway; IMP from 5-formamido-1-(5-phospho-D-ribosyl)imidazole-4-carboxamide: step 1/1. The protein is Bifunctional purine biosynthesis protein PurH of Burkholderia lata (strain ATCC 17760 / DSM 23089 / LMG 22485 / NCIMB 9086 / R18194 / 383).